We begin with the raw amino-acid sequence, 131 residues long: Large ribosomal subunit protein bL17 (131 aa).

This sequence belongs to the bacterial ribosomal protein bL17 family. As to quaternary structure, part of the 50S ribosomal subunit. Contacts protein L32.

The polypeptide is Large ribosomal subunit protein bL17 (Methylobacillus flagellatus (strain ATCC 51484 / DSM 6875 / VKM B-1610 / KT)).